We begin with the raw amino-acid sequence, 220 residues long: ATP-dependent Clp protease proteolytic subunit (220 aa).

Ser125 acts as the Nucleophile in catalysis. Residue His150 is part of the active site.

The protein belongs to the peptidase S14 family. Fourteen ClpP subunits assemble into 2 heptameric rings which stack back to back to give a disk-like structure with a central cavity, resembling the structure of eukaryotic proteasomes.

It is found in the cytoplasm. It catalyses the reaction Hydrolysis of proteins to small peptides in the presence of ATP and magnesium. alpha-casein is the usual test substrate. In the absence of ATP, only oligopeptides shorter than five residues are hydrolyzed (such as succinyl-Leu-Tyr-|-NHMec, and Leu-Tyr-Leu-|-Tyr-Trp, in which cleavage of the -Tyr-|-Leu- and -Tyr-|-Trp bonds also occurs).. Its function is as follows. Cleaves peptides in various proteins in a process that requires ATP hydrolysis. Has a chymotrypsin-like activity. Plays a major role in the degradation of misfolded proteins. The chain is ATP-dependent Clp protease proteolytic subunit from Bacteroides thetaiotaomicron (strain ATCC 29148 / DSM 2079 / JCM 5827 / CCUG 10774 / NCTC 10582 / VPI-5482 / E50).